A 347-amino-acid chain; its full sequence is NADH-ubiquinone oxidoreductase chain 2 (347 aa).

The next 11 helical transmembrane spans lie at 1–21 (MNPLIFSTILATIIMGTAIVM), 25–45 (HWLTIWIGFEMNMLAIIPMLM), 59–79 (YFLTQATASMLLMLAVIMNLT), 96–116 (IIMTIALTMKLGLSPFHFWVP), 127–147 (CLILLTWQKLAPLSILYMISP), 149–169 (INLNLLLSMSLISVAIGGWGG), 178–198 (IMAYSSIAHMGWMTAILAYNP), 200–220 (MTMLNLLVYITMTTTMFMLLI), 247–267 (IMLSLGGLPPLTGFLPKWMII), 276–296 (IIMPTLMAIMALLSLYFYMRL), and 325–345 (LLSPLIVMSTLTLPLAPMMSL).

Belongs to the complex I subunit 2 family. Core subunit of respiratory chain NADH dehydrogenase (Complex I) which is composed of 45 different subunits. Interacts with TMEM242.

It is found in the mitochondrion inner membrane. It carries out the reaction a ubiquinone + NADH + 5 H(+)(in) = a ubiquinol + NAD(+) + 4 H(+)(out). In terms of biological role, core subunit of the mitochondrial membrane respiratory chain NADH dehydrogenase (Complex I) which catalyzes electron transfer from NADH through the respiratory chain, using ubiquinone as an electron acceptor. Essential for the catalytic activity and assembly of complex I. The sequence is that of NADH-ubiquinone oxidoreductase chain 2 from Natalus stramineus (Mexican funnel-eared bat).